Here is a 593-residue protein sequence, read N- to C-terminus: Tectonic-1 (593 aa).

Residues M1–T22 form the signal peptide. A disordered region spans residues K37–P72. Residue N41 is glycosylated (N-linked (GlcNAc...) asparagine). Positions S42 to T58 are enriched in polar residues. A glycan (N-linked (GlcNAc...) asparagine) is linked at N303. The residue at position 486 (R486) is an Omega-N-methylarginine. N536 carries N-linked (GlcNAc...) asparagine glycosylation.

This sequence belongs to the tectonic family. In terms of assembly, part of the tectonic-like complex (also named B9 complex).

It is found in the cytoplasm. It localises to the cytoskeleton. Its subcellular location is the cilium basal body. The protein localises to the secreted. In terms of biological role, component of the tectonic-like complex, a complex localized at the transition zone of primary cilia and acting as a barrier that prevents diffusion of transmembrane proteins between the cilia and plasma membranes. Regulator of Hedgehog (Hh), required for both activation and inhibition of the Hh pathway in the patterning of the neural tube. During neural tube development, it is required for formation of the most ventral cell types and for full Hh pathway activation. Functions in Hh signal transduction to fully activate the pathway in the presence of high Hh levels and to repress the pathway in the absence of Hh signals. Modulates Hh signal transduction downstream of SMO and RAB23. The polypeptide is Tectonic-1 (Tctn1) (Mus musculus (Mouse)).